The chain runs to 285 residues: Golgi to ER traffic protein 2 (285 aa).

Over residues 1-10 (MSELTEAEKR) the composition is skewed to basic and acidic residues. The tract at residues 1–71 (MSELTEAEKR…HSATPDIKED (71 aa)) is disordered. Position 2 is an N-acetylserine (Ser-2). Residues 2–148 (SELTEAEKRR…LDYHDYLLNR (147 aa)) are Cytoplasmic-facing. Residues 11–20 (RLLRERRQKK) are compositionally biased toward basic residues. Over residues 24 to 42 (GGASSRLNKITGQASSHLN) the composition is skewed to polar residues. Ser-45 is modified (phosphoserine). Residues 49-60 (APSAAKATPPAS) show a composition bias toward low complexity. The helical transmembrane segment at 149–169 (LKAWTILVKWVFFLLPYLYLI) threads the bilayer. The Lumenal segment spans residues 170-196 (TRPNSSVWPAYAFTQSAWFAPLRNPSN). 2 N-linked (GlcNAc...) asparagine glycosylation sites follow: Asn-173 and Asn-196. A helical membrane pass occupies residues 197–216 (FTRIFATFEFLSISIYYQLL). The Cytoplasmic portion of the chain corresponds to 217 to 263 (KNVEHKSKIKNLQDTNKLVKLVSLVPEGVIPVANLKGKLITLLQYWD). A helical transmembrane segment spans residues 264-284 (LLSMLITDISFVLIVLGLLTY). Position 285 (Leu-285) is a topological domain, lumenal.

The protein belongs to the GET2 family. In terms of assembly, component of the Golgi to ER traffic (GET) complex, which is composed of GET1, GET2 and GET3. Within the complex, GET1 and GET2 form a heterotetramer which is stabilized by phosphatidylinositol binding and which binds to the GET3 homodimer.

The protein resides in the endoplasmic reticulum membrane. It localises to the golgi apparatus membrane. In terms of biological role, required for the post-translational delivery of tail-anchored (TA) proteins to the endoplasmic reticulum. Together with GET1, acts as a membrane receptor for soluble GET3, which recognizes and selectively binds the transmembrane domain of TA proteins in the cytosol. The GET complex cooperates with the HDEL receptor ERD2 to mediate the ATP-dependent retrieval of resident ER proteins that contain a C-terminal H-D-E-L retention signal from the Golgi to the ER. Involved in DNA replication and DNA damage response and also in cell wall function. The sequence is that of Golgi to ER traffic protein 2 from Saccharomyces cerevisiae (strain YJM789) (Baker's yeast).